The primary structure comprises 78 residues: Large ribosomal subunit protein bL28 (78 aa).

A disordered region spans residues 1–27 (MSAYCQVTGRKPSFGKSVSHSHRRTNR).

It belongs to the bacterial ribosomal protein bL28 family.

The sequence is that of Large ribosomal subunit protein bL28 from Corynebacterium kroppenstedtii (strain DSM 44385 / JCM 11950 / CIP 105744 / CCUG 35717).